We begin with the raw amino-acid sequence, 4128 residues long: DNA-dependent protein kinase catalytic subunit (4128 aa).

Position 117 is an N6-acetyllysine (lysine 117). One copy of the HEAT 1 repeat lies at aspartate 288 to isoleucine 323. Residues serine 511, serine 686, serine 840, and serine 891 each carry the phosphoserine modification. HEAT repeat units lie at residues glutamine 1001–serine 1037 and proline 1050–phenylalanine 1086. Phosphoserine is present on serine 1062. Lysine 1206 bears the N6-acetyllysine mark. Positions leucine 1501–leucine 1536 are interaction with C1D. The leucine-zipper stretch occupies residues leucine 1501–leucine 1536. A TPR 1 repeat occupies proline 1720–proline 1753. Residue lysine 1967 is modified to N6-acetyllysine. The interval tyrosine 2049 to serine 2071 is disordered. Serine 2053 bears the Phosphoserine; by autocatalysis mark. Residues glutamine 2054 to aspartate 2070 show a composition bias toward basic and acidic residues. Lysine 2255 is subject to N6-acetyllysine. The KIP-binding stretch occupies residues leucine 2432–glutamate 3213. A Phosphothreonine modification is found at threonine 2531. Phosphothreonine; by autocatalysis is present on threonine 2605. Serine 2608 is subject to Phosphoserine; by autocatalysis. The segment at threonine 2614–glutamine 2635 is disordered. Residues threonine 2634 and threonine 2643 each carry the phosphothreonine; by autocatalysis modification. The may split the end of the DNA molecule, with the two strands separating around the region stretch occupies residues glutamate 2738–glutamine 2766. The FAT domain maps to proline 2907–serine 3539. TPR repeat units lie at residues valine 2921–threonine 2954 and asparagine 2956–valine 2983. The residue at position 3206 (serine 3206) is a Phosphoserine. 4 positions are modified to N6-acetyllysine: lysine 3241, lysine 3260, lysine 3638, and lysine 3642. The PI3K/PI4K catalytic domain occupies phenylalanine 3722–glycine 4053. The interval valine 3728 to lysine 3734 is G-loop. Phosphoserine occurs at positions 3731 and 3821. The catalytic loop stretch occupies residues glycine 3919–asparagine 3927. The segment at glycine 3939–threonine 3964 is activation loop. The residue at position 4026 (serine 4026) is a Phosphoserine. The region spanning serine 4096–methionine 4128 is the FATC domain.

This sequence belongs to the PI3/PI4-kinase family. In terms of assembly, DNA-PK is a heterotrimer of PRKDC and the Ku dimer (composed of XRCC6/Ku70 and XRCC5/Ku86). Formation of this complex may be promoted by interaction with ILF3. Component of the core long-range non-homologous end joining (NHEJ) complex (also named DNA-PK complex) composed of PRKDC, LIG4, XRCC4, XRCC6/Ku70, XRCC5/Ku86 and NHEJ1/XLF. Additional component of the NHEJ complex includes PAXX. Following autophosphorylation, PRKDC dissociates from DNA. Interacts with DNA-PKcs-interacting protein (KIP) with the region upstream the kinase domain. PRKDC alone also interacts with and phosphorylates DCLRE1C, thereby activating the latent endonuclease activity of this protein. Interacts with C1D. Interacts with TTI1 and TELO2. Interacts with CIB1. Interacts with SETX. Interacts with NR4A3; the DNA-dependent protein kinase complex DNA-PK phosphorylates and activates NR4A3 and prevents NR4A3 ubiquitination and degradation. Interacts with BRAT1. Part of the HDP-RNP complex composed of at least HEXIM1, PRKDC, XRCC5, XRCC6, paraspeckle proteins (SFPQ, NONO, PSPC1, RBM14, and MATR3) and NEAT1 RNA. Interacts with KAT5. Autophosphorylated at two clusters, the T2609 cluster and the S2056 cluster. Autophosphorylated on Ser-2053, Thr-2605, Thr-2634 and Thr-2643. Ser-2053 and Thr-2605 are DNA damage-inducible phosphorylation sites (inducible with ionizing radiation, IR) dephosphorylated by PPP5C. Autophosphorylation induces a conformational change that leads to remodeling of the DNA-PK complex, requisite for efficient end processing and DNA repair. Autophosphorylation in trans within DNA-PK complexes loaded on DNA ends leads to the dissociation of PRKDC from DNA and the transition into the short-range NHEJ complex. Autophosphorylation of the T2609 cluster is required for hematopoietic development and protein synthesis in erythrocytes precursors. In terms of processing, S-nitrosylated by GAPDH. Post-translationally, polyubiquitinated by RNF144A, leading to proteasomal degradation.

The protein resides in the nucleus. Its subcellular location is the nucleolus. It localises to the cytoplasm. The protein localises to the cytosol. The catalysed reaction is L-seryl-[protein] + ATP = O-phospho-L-seryl-[protein] + ADP + H(+). It catalyses the reaction L-threonyl-[protein] + ATP = O-phospho-L-threonyl-[protein] + ADP + H(+). Activity seems to be attenuated by autophosphorylation. Binding to the SL1 region of U3 small nucleolar RNA promotes auto-phosphorylation activity. Inhibited by wortmannin. Functionally, serine/threonine-protein kinase that acts as a molecular sensor for DNA damage. Involved in DNA non-homologous end joining (NHEJ) required for double-strand break (DSB) repair and V(D)J recombination. Must be bound to DNA to express its catalytic properties. Promotes processing of hairpin DNA structures in V(D)J recombination by activation of the hairpin endonuclease artemis (DCLRE1C). Recruited by XRCC5 and XRCC6 to DNA ends and is required to (1) protect and align broken ends of DNA, thereby preventing their degradation, (2) and sequester the DSB for repair by NHEJ. Acts as a scaffold protein to aid the localization of DNA repair proteins to the site of damage. The assembly of the DNA-PK complex at DNA ends is also required for the NHEJ ligation step. Found at the ends of chromosomes, suggesting a further role in the maintenance of telomeric stability and the prevention of chromosomal end fusion. Also involved in modulation of transcription. As part of the DNA-PK complex, involved in the early steps of ribosome assembly by promoting the processing of precursor rRNA into mature 18S rRNA in the small-subunit processome. Binding to U3 small nucleolar RNA, recruits PRKDC and XRCC5/Ku86 to the small-subunit processome. Recognizes the substrate consensus sequence [ST]-Q. Phosphorylates 'Ser-139' of histone variant H2AX, thereby regulating DNA damage response mechanism. Phosphorylates ASF1A, DCLRE1C, c-Abl/ABL1, histone H1, HSPCA, c-jun/JUN, p53/TP53, PARP1, POU2F1, DHX9, FH, SRF, NHEJ1/XLF, XRCC1, XRCC4, XRCC5, XRCC6, WRN, MYC and RFA2. Can phosphorylate C1D not only in the presence of linear DNA but also in the presence of supercoiled DNA. Ability to phosphorylate p53/TP53 in the presence of supercoiled DNA is dependent on C1D. Acts as a regulator of the phosphatidylinositol 3-kinase/protein kinase B signal transduction by mediating phosphorylation of 'Ser-473' of protein kinase B (PKB/AKT1, PKB/AKT2, PKB/AKT3), promoting their activation. Contributes to the determination of the circadian period length by antagonizing phosphorylation of CRY1 'Ser-588' and increasing CRY1 protein stability, most likely through an indirect mechanism. Plays a role in the regulation of DNA virus-mediated innate immune response by assembling into the HDP-RNP complex, a complex that serves as a platform for IRF3 phosphorylation and subsequent innate immune response activation through the cGAS-STING pathway. Also regulates the cGAS-STING pathway by catalyzing phosphorylation of CGAS, thereby impairing CGAS oligomerization and activation. Also regulates the cGAS-STING pathway by mediating phosphorylation of PARP1. The polypeptide is DNA-dependent protein kinase catalytic subunit (Prkdc) (Mus musculus (Mouse)).